Here is a 770-residue protein sequence, read N- to C-terminus: DEAD-box ATP-dependent RNA helicase 24 (770 aa).

A disordered region spans residues 1–106 (MSKRPKLGGF…ADSDDEDDPV (106 aa)). Polar residues predominate over residues 14-26 (RPTSYSFERSQPP). Positions 34–43 (DDPDLDDIAF) are enriched in acidic residues. Residues 44 to 55 (SDDAAAPSDAPP) are compositionally biased toward low complexity. The short motif at 219–247 (KSFADCGFPVQLMNAIAKQGYEKPTTIQC) is the Q motif element. Residues 250–425 (LPIVLSGRDI…REILTDPIRV (176 aa)) form the Helicase ATP-binding domain. 263 to 270 (AKTGSGKT) is a binding site for ATP. The DEAD box motif lies at 373 to 376 (DEAD). The 164-residue stretch at 436-599 (DIKQVVNVLP…DVPNELMDLA (164 aa)) folds into the Helicase C-terminal domain. The segment covering 604 to 613 (RFRANRDSRK) has biased composition (basic and acidic residues). Disordered stretches follow at residues 604-640 (RFRANRDSRKGGKKSGKGKGGGGGGGGGSGARGRGRG), 683-704 (VSASSSNTPSNSAPSRGAPSSF), and 729-770 (LPAP…GWDR). The segment covering 621–635 (GKGGGGGGGGGSGAR) has biased composition (gly residues). Low complexity predominate over residues 683–697 (VSASSSNTPSNSAPS). The span at 744-753 (TVENANPNPE) shows a compositional bias: polar residues. Over residues 754-770 (SSRDRTRERKRPSGWDR) the composition is skewed to basic and acidic residues.

It belongs to the DEAD box helicase family.

It carries out the reaction ATP + H2O = ADP + phosphate + H(+). In Oryza sativa subsp. japonica (Rice), this protein is DEAD-box ATP-dependent RNA helicase 24.